The chain runs to 598 residues: Elongation factor 4 (598 aa).

The 178-residue stretch at 4–181 (SKIRNFSIIA…AVIEKIPAPK (178 aa)) folds into the tr-type G domain. GTP-binding positions include 16-21 (DHGKST) and 128-131 (NKID).

The protein belongs to the TRAFAC class translation factor GTPase superfamily. Classic translation factor GTPase family. LepA subfamily.

It is found in the cell membrane. The enzyme catalyses GTP + H2O = GDP + phosphate + H(+). In terms of biological role, required for accurate and efficient protein synthesis under certain stress conditions. May act as a fidelity factor of the translation reaction, by catalyzing a one-codon backward translocation of tRNAs on improperly translocated ribosomes. Back-translocation proceeds from a post-translocation (POST) complex to a pre-translocation (PRE) complex, thus giving elongation factor G a second chance to translocate the tRNAs correctly. Binds to ribosomes in a GTP-dependent manner. This Mycoplasma mobile (strain ATCC 43663 / 163K / NCTC 11711) (Mesomycoplasma mobile) protein is Elongation factor 4.